Here is a 272-residue protein sequence, read N- to C-terminus: Putative hydro-lyase BBta_2883 (272 aa).

The protein belongs to the D-glutamate cyclase family.

The chain is Putative hydro-lyase BBta_2883 from Bradyrhizobium sp. (strain BTAi1 / ATCC BAA-1182).